The primary structure comprises 1097 residues: MSSTKLSTSILPDLVEIQRASFCWFLEEGLAEEIKSFSPITDYTGNLELHFFGDQFKLKCPKYNLLESKRRDATYSVQVYVPARLINRDTGIIKEQEVFIGDLPLMTDRGTFIINGAERVIVNQIVRSPGIYYKSETDRQGRRTYSGSLISNRGAWVKFETDRNDLVWVRIDKTRKIPAHVFLKAMGLSDSDIYNGLRHPEYLKKSFRVEGNYTTEEALIQMYTKLRPGEPATVNGGQQILYSRFFDPKRYDLGKVGRYKINKKLALSIPENIKVLTPQDTLSAIDYLINLKFNIGETDDIDHLGNRRVRSVGELLQNQVRVGLNRLERIIRERMTICDSESLAPNTLVNPKPIIAAIREFFGSSQLSQFMDQTNPLAELTHKRRISALGPGGLNRDRAGFAVRDIHPSHYGRICPIETPEGPNAGLIGVLATHARINSYGFIETPFYQVINGKVVSDGNPVYLTADQEDNFRIAPGDIAIDENNAINNDIVPVRYRQEFTITKPEQIDYIQVSPIQVISIATSLIPFLEHDDANRALMGSNMQRQAVPLLYPESPLIGTGIEAQAARDSGMVVVSYQDGRVTYVSANKICITDDEGKEVVYYLQKYQRSNQDTCINQRPSVWLGEKVVAGQVIADGAATEGGELALGQNILIAYLPWEGYNYEDAFLISERLVYNDVYTSVHIEKYEIEARQTKLGSEEITRELPNIGEYSLRKLDDNGIIVIGSWVEVGDILVGKVTPKGESDQPPEGKLLRAIFGEKARDVRDTSLRVPNGGRGRVLDVRIFTREKGDELPTGANIVIRVYVAQTRKIQVGDKMAGRHGNKGIISRILPRQDMPYLPDGTPVDLVLNPLGVPSRMNVGQIFECLLGLAAENLDKRFKIIPFDEMNGAEASRVLVNEKLMEARTLTEKDWIFDLRHPGKTQLFDGRTGEAFDNPVTVGISYMLKLVHLVDDKIHARSTGPYSLVTQQPLGGKAQHGGQRLGEMEVWALEAFGASYTLQELLTVKSDDMQGRNETLNAIVKGKPIPRPGTPESFKVLMRELQSLGLDIGAYKIENLPDGQTRGIEVDLMSNLHNRRVPSRPTYESITREDLENSFA.

The protein belongs to the RNA polymerase beta chain family. In plastids the minimal PEP RNA polymerase catalytic core is composed of four subunits: alpha, beta, beta', and beta''. When a (nuclear-encoded) sigma factor is associated with the core the holoenzyme is formed, which can initiate transcription.

Its subcellular location is the plastid. The protein resides in the chloroplast. It catalyses the reaction RNA(n) + a ribonucleoside 5'-triphosphate = RNA(n+1) + diphosphate. Functionally, DNA-dependent RNA polymerase catalyzes the transcription of DNA into RNA using the four ribonucleoside triphosphates as substrates. The protein is DNA-directed RNA polymerase subunit beta of Rhodomonas salina (Cryptomonas salina).